The sequence spans 325 residues: Transcription initiation factor IIB (325 aa).

The TFIIB-type zinc finger occupies 19-52 (NKLWCMVCRIQDPDIIEDYAKGDLICRGCGVVVG). Residues cysteine 23, cysteine 26, cysteine 44, and cysteine 47 each coordinate Zn(2+). 2 repeat units span residues 131–207 (MADH…IMKE) and 227–303 (FCST…DLYA).

It belongs to the TFIIB family.

The protein resides in the nucleus. Functionally, general transcription factor that plays a role in transcription initiation by RNA polymerase II (Pol II). Involved in the pre-initiation complex (PIC) formation and Pol II recruitment at promoter DNA. This chain is Transcription initiation factor IIB (gtf2b), found in Dictyostelium discoideum (Social amoeba).